Consider the following 62-residue polypeptide: Phylloseptin-Az7 (62 aa).

The N-terminal stretch at 1 to 19 (LKKSLFLVLFLGLVSLSIC) is a signal peptide. Positions 20 to 40 (EEEKRETEEKENEQEDDKSEE) are excised as a propeptide. Phenylalanine 61 bears the Phenylalanine amide mark.

This sequence belongs to the frog skin active peptide (FSAP) family. Phylloseptin subfamily. In terms of tissue distribution, expressed by the skin glands.

The protein localises to the secreted. Functionally, has antimicrobial activity. In Pithecopus azureus (Orange-legged monkey tree frog), this protein is Phylloseptin-Az7 (psn15).